A 155-amino-acid polypeptide reads, in one-letter code: Vasotocin-neurophysin VT 1 (155 aa).

A signal peptide spans 1–20; it reads MPDSTIPLLCVLGLLALSSA. C21 and C26 are disulfide-bonded. G29 is subject to Glycine amide. Intrachain disulfides connect C41/C85, C44/C58, C52/C75, C59/C65, C92/C105, C99/C117, and C106/C111.

This sequence belongs to the vasopressin/oxytocin family. In terms of processing, seven disulfide bonds are present in neurophysin.

The protein localises to the secreted. In terms of biological role, vasotocin is probably an antidiuretic hormone. The polypeptide is Vasotocin-neurophysin VT 1 (Oncorhynchus masou (Cherry salmon)).